A 230-amino-acid polypeptide reads, in one-letter code: Ribonuclease 3 (230 aa).

The RNase III domain maps to 6-135 (VSELRARYGI…FNGALFLDQG (130 aa)). E48 lines the Mg(2+) pocket. The active site involves D52. 2 residues coordinate Mg(2+): D121 and E124. The active site involves E124. Positions 161–230 (DYKTNLQEFL…AKKALEQLKA (70 aa)) constitute a DRBM domain.

This sequence belongs to the ribonuclease III family. In terms of assembly, homodimer. The cofactor is Mg(2+).

It is found in the cytoplasm. It catalyses the reaction Endonucleolytic cleavage to 5'-phosphomonoester.. Digests double-stranded RNA. Involved in the processing of primary rRNA transcript to yield the immediate precursors to the large and small rRNAs (23S and 16S). Processes some mRNAs, and tRNAs when they are encoded in the rRNA operon. Processes pre-crRNA and tracrRNA of type II CRISPR loci if present in the organism. The polypeptide is Ribonuclease 3 (Latilactobacillus sakei subsp. sakei (strain 23K) (Lactobacillus sakei subsp. sakei)).